A 203-amino-acid polypeptide reads, in one-letter code: SPbeta prophage-derived uncharacterized lipoprotein YonS (203 aa).

The first 21 residues, 1–21 (MKLFKKLGILLLITSLILLAA), serve as a signal peptide directing secretion. Residue Cys-22 is the site of N-palmitoyl cysteine attachment. Cys-22 is lipidated: S-diacylglycerol cysteine. The segment covering 27 to 46 (ESSSSSEDTNNATDTNTSES) has biased composition (low complexity). The segment at 27–57 (ESSSSSEDTNNATDTNTSESQDISVNGPEKV) is disordered.

The protein resides in the cell membrane. The chain is SPbeta prophage-derived uncharacterized lipoprotein YonS (yonS) from Bacillus subtilis (strain 168).